A 302-amino-acid polypeptide reads, in one-letter code: Pantothenate synthetase (302 aa).

ATP is bound at residue 47–54 (MGALHEGH). The Proton donor role is filled by histidine 54. Glutamine 79 contacts (R)-pantoate. Glutamine 79 is a binding site for beta-alanine. ATP is bound at residue 165–168 (GEKD). (R)-pantoate is bound at residue glutamine 171. Residues valine 194 and 202–205 (LSSR) each bind ATP.

It belongs to the pantothenate synthetase family. Homodimer.

The protein localises to the cytoplasm. The catalysed reaction is (R)-pantoate + beta-alanine + ATP = (R)-pantothenate + AMP + diphosphate + H(+). It participates in cofactor biosynthesis; (R)-pantothenate biosynthesis; (R)-pantothenate from (R)-pantoate and beta-alanine: step 1/1. Functionally, catalyzes the condensation of pantoate with beta-alanine in an ATP-dependent reaction via a pantoyl-adenylate intermediate. The polypeptide is Pantothenate synthetase (Saccharopolyspora erythraea (strain ATCC 11635 / DSM 40517 / JCM 4748 / NBRC 13426 / NCIMB 8594 / NRRL 2338)).